Consider the following 118-residue polypeptide: V-type proton ATPase subunit G 3 (118 aa).

Positions 1–12 (MTSQSQGIQQLL) are enriched in polar residues. The segment at 1 to 44 (MTSQSQGIQQLLQAEKRAKDKLDEAKKRKGKRLRQAKEEAVAET) is disordered. The stretch at 5–53 (SQGIQQLLQAEKRAKDKLDEAKKRKGKRLRQAKEEAVAETDQYRMQMEK) forms a coiled coil. Residues 14–26 (AEKRAKDKLDEAK) are compositionally biased toward basic and acidic residues.

It belongs to the V-ATPase G subunit family. As to quaternary structure, V-ATPase is a heteromultimeric enzyme made up of two complexes: the ATP-hydrolytic V1 complex and the proton translocation V0 complex. The V1 complex consists of three catalytic AB heterodimers that form a heterohexamer, three peripheral stalks each consisting of EG heterodimers, one central rotor including subunits D and F, and the regulatory subunits C and H. The proton translocation complex V0 consists of the proton transport subunit a, a ring of proteolipid subunits c9c'', rotary subunit d, subunits e and f, and the accessory subunits ATP6AP1/Ac45 and ATP6AP2/PRR. In terms of tissue distribution, kidney.

Its function is as follows. Subunit of the V1 complex of vacuolar(H+)-ATPase (V-ATPase), a multisubunit enzyme composed of a peripheral complex (V1) that hydrolyzes ATP and a membrane integral complex (V0) that translocates protons. V-ATPase is responsible for acidifying and maintaining the pH of intracellular compartments and in some cell types, is targeted to the plasma membrane, where it is responsible for acidifying the extracellular environment. The protein is V-type proton ATPase subunit G 3 (Atp6v1g3) of Mus musculus (Mouse).